The following is a 1333-amino-acid chain: Aldehyde oxidase 1 (1333 aa).

In terms of domain architecture, 2Fe-2S ferredoxin-type spans 4–91 (PQLLFYVNGQ…GTAVTTVEGI (88 aa)). Residues C43, C48, C51, and C73 each coordinate [2Fe-2S] cluster. Mo-molybdopterin is bound at residue Q112. 4 residues coordinate [2Fe-2S] cluster: C113, C116, C148, and C150. C150 is a Mo-molybdopterin binding site. Positions 235–420 (FYSNRMTWIS…VSVNIPCSRK (186 aa)) constitute an FAD-binding PCMH-type domain. FAD is bound by residues 263-270 (IVMGYTSV), A344, S353, H357, D366, and L410. Mo-molybdopterin is bound by residues 801–802 (AF) and M1042. Phosphoserine is present on S1063. Mo-molybdopterin is bound by residues 1083–1086 (GSVV), Q1198, and L1263. E1265 functions as the Proton acceptor; for azaheterocycle hydroxylase activity in the catalytic mechanism.

It belongs to the xanthine dehydrogenase family. Homodimer. Requires [2Fe-2S] cluster as cofactor. It depends on FAD as a cofactor. Mo-molybdopterin is required as a cofactor. The N-terminus is blocked. In terms of tissue distribution, expression in liver (at protein level). Also detected in heart, lung, spleen and kidney.

It localises to the cytoplasm. It carries out the reaction an aldehyde + O2 + H2O = a carboxylate + H2O2 + H(+). The enzyme catalyses retinal + O2 + H2O = retinoate + H2O2 + H(+). With respect to regulation, inhibited by menadione and isovanillin. Not inhibited by allopurinol, a xanthine dehydrogenase potent inhibitor. Inhibited by the flavonoids quercetin, myricetin and genistein. Nitric oxide generation is inhibited by raloxifene and competitively inhibited by an increase in oxygen levels. Its function is as follows. Oxidase with broad substrate specificity, oxidizing aromatic azaheterocycles, such as N1-methylnicotinamide, N-methylphthalazinium and phthalazine, as well as aldehydes, such as benzaldehyde, retinal, pyridoxal, and vanillin. Plays a role in the metabolism of xenobiotics and drugs containing aromatic azaheterocyclic substituents. Participates in the bioactivation of prodrugs such as famciclovir, catalyzing the oxidation step from 6-deoxypenciclovir to penciclovir, which is a potent antiviral agent. Is probably involved in the regulation of reactive oxygen species homeostasis. Is a prominent source of superoxide generation via the one-electron reduction of molecular oxygen. Also catalyzes nitric oxide (NO) production; under anaerobic conditions, reduces nitrite to NO with NADH or aldehyde as electron donor, but under aerobic conditions, NADH is the preferred substrate. These reactions may be catalyzed by several isozymes. May play a role in adipogenesis. This Rattus norvegicus (Rat) protein is Aldehyde oxidase 1.